The following is a 352-amino-acid chain: 4-hydroxy-2-oxovalerate aldolase 5 (352 aa).

One can recognise a Pyruvate carboxyltransferase domain in the interval 9 to 261 (IRVTDSSLRD…RTGIDTLKII (253 aa)). 17–18 (RD) contacts substrate. D18 serves as a coordination point for Mn(2+). The Proton acceptor role is filled by H21. Residues S171 and H200 each coordinate substrate. H200 and H202 together coordinate Mn(2+). Position 291 (Y291) interacts with substrate.

This sequence belongs to the 4-hydroxy-2-oxovalerate aldolase family.

It carries out the reaction (S)-4-hydroxy-2-oxopentanoate = acetaldehyde + pyruvate. The chain is 4-hydroxy-2-oxovalerate aldolase 5 from Rhodococcus opacus (strain B4).